Consider the following 204-residue polypeptide: MSSKNNPESETKAKNKWEKVMEAEEEQEEGGGDGSQEMEPHREGLEFPSREKLEGQLTRMEHKVDEYKTQYLRAQAEMDNLRKRIEREKADIIKFGSKQLITDLLPVADSLIHGLESPASEDPQVKSMRDGMSLTLDLLHNTLAKHGVQVINPNPGDPFDPALHEAMSVQAVPDAKPDTIIQVLQKGYQLNGRVLRAARVIVAG.

The tract at residues 1-52 (MSSKNNPESETKAKNKWEKVMEAEEEQEEGGGDGSQEMEPHREGLEFPSREK) is disordered. Composition is skewed to basic and acidic residues over residues 7-22 (PESE…KVME) and 38-52 (MEPH…SREK).

It belongs to the GrpE family. In terms of assembly, homodimer.

The protein localises to the cytoplasm. Its function is as follows. Participates actively in the response to hyperosmotic and heat shock by preventing the aggregation of stress-denatured proteins, in association with DnaK and GrpE. It is the nucleotide exchange factor for DnaK and may function as a thermosensor. Unfolded proteins bind initially to DnaJ; upon interaction with the DnaJ-bound protein, DnaK hydrolyzes its bound ATP, resulting in the formation of a stable complex. GrpE releases ADP from DnaK; ATP binding to DnaK triggers the release of the substrate protein, thus completing the reaction cycle. Several rounds of ATP-dependent interactions between DnaJ, DnaK and GrpE are required for fully efficient folding. The polypeptide is Protein GrpE (Coxiella burnetii (strain Dugway 5J108-111)).